We begin with the raw amino-acid sequence, 94 residues long: Pyrimidine/purine nucleoside phosphorylase (94 aa).

This sequence belongs to the nucleoside phosphorylase PpnP family.

The enzyme catalyses a purine D-ribonucleoside + phosphate = a purine nucleobase + alpha-D-ribose 1-phosphate. It carries out the reaction adenosine + phosphate = alpha-D-ribose 1-phosphate + adenine. The catalysed reaction is cytidine + phosphate = cytosine + alpha-D-ribose 1-phosphate. It catalyses the reaction guanosine + phosphate = alpha-D-ribose 1-phosphate + guanine. The enzyme catalyses inosine + phosphate = alpha-D-ribose 1-phosphate + hypoxanthine. It carries out the reaction thymidine + phosphate = 2-deoxy-alpha-D-ribose 1-phosphate + thymine. The catalysed reaction is uridine + phosphate = alpha-D-ribose 1-phosphate + uracil. It catalyses the reaction xanthosine + phosphate = alpha-D-ribose 1-phosphate + xanthine. In terms of biological role, catalyzes the phosphorolysis of diverse nucleosides, yielding D-ribose 1-phosphate and the respective free bases. Can use uridine, adenosine, guanosine, cytidine, thymidine, inosine and xanthosine as substrates. Also catalyzes the reverse reactions. The protein is Pyrimidine/purine nucleoside phosphorylase of Pseudomonas fluorescens (strain ATCC BAA-477 / NRRL B-23932 / Pf-5).